Consider the following 412-residue polypeptide: 1-deoxy-D-xylulose 5-phosphate reductoisomerase (412 aa).

8 residues coordinate NADPH: threonine 5, glycine 6, serine 7, isoleucine 8, glycine 31, arginine 32, asparagine 33, and asparagine 125. Position 126 (lysine 126) interacts with 1-deoxy-D-xylulose 5-phosphate. Glutamate 127 provides a ligand contact to NADPH. Aspartate 151 contacts Mn(2+). Serine 152, glutamate 153, serine 189, and histidine 212 together coordinate 1-deoxy-D-xylulose 5-phosphate. Residue glutamate 153 coordinates Mn(2+). NADPH is bound at residue glycine 218. Residues serine 225, asparagine 230, lysine 231, and glutamate 234 each coordinate 1-deoxy-D-xylulose 5-phosphate. Glutamate 234 contacts Mn(2+).

The protein belongs to the DXR family. Requires Mg(2+) as cofactor. It depends on Mn(2+) as a cofactor.

The enzyme catalyses 2-C-methyl-D-erythritol 4-phosphate + NADP(+) = 1-deoxy-D-xylulose 5-phosphate + NADPH + H(+). The protein operates within isoprenoid biosynthesis; isopentenyl diphosphate biosynthesis via DXP pathway; isopentenyl diphosphate from 1-deoxy-D-xylulose 5-phosphate: step 1/6. In terms of biological role, catalyzes the NADPH-dependent rearrangement and reduction of 1-deoxy-D-xylulose-5-phosphate (DXP) to 2-C-methyl-D-erythritol 4-phosphate (MEP). This is 1-deoxy-D-xylulose 5-phosphate reductoisomerase from Prochlorococcus marinus (strain SARG / CCMP1375 / SS120).